A 269-amino-acid chain; its full sequence is Tryptophan synthase alpha chain (269 aa).

Catalysis depends on proton acceptor residues Glu49 and Asp60.

It belongs to the TrpA family. In terms of assembly, tetramer of two alpha and two beta chains.

The catalysed reaction is (1S,2R)-1-C-(indol-3-yl)glycerol 3-phosphate + L-serine = D-glyceraldehyde 3-phosphate + L-tryptophan + H2O. It functions in the pathway amino-acid biosynthesis; L-tryptophan biosynthesis; L-tryptophan from chorismate: step 5/5. Its function is as follows. The alpha subunit is responsible for the aldol cleavage of indoleglycerol phosphate to indole and glyceraldehyde 3-phosphate. In Acidovorax sp. (strain JS42), this protein is Tryptophan synthase alpha chain.